Here is a 479-residue protein sequence, read N- to C-terminus: Ribulose bisphosphate carboxylase large chain (479 aa).

Residues 1-2 constitute a propeptide that is removed on maturation; that stretch reads MS. Pro-3 carries the N-acetylproline modification. Lys-14 is modified (N6,N6,N6-trimethyllysine). Substrate-binding residues include Asn-123 and Thr-173. Lys-175 functions as the Proton acceptor in the catalytic mechanism. Lys-177 provides a ligand contact to substrate. 3 residues coordinate Mg(2+): Lys-201, Asp-203, and Glu-204. Lys-201 carries the N6-carboxylysine modification. The Proton acceptor role is filled by His-294. The substrate site is built by Arg-295, His-327, and Ser-379.

Belongs to the RuBisCO large chain family. Type I subfamily. In terms of assembly, heterohexadecamer of 8 large chains and 8 small chains; disulfide-linked. The disulfide link is formed within the large subunit homodimers. Requires Mg(2+) as cofactor. Post-translationally, the disulfide bond which can form in the large chain dimeric partners within the hexadecamer appears to be associated with oxidative stress and protein turnover.

The protein localises to the plastid. Its subcellular location is the chloroplast. It catalyses the reaction 2 (2R)-3-phosphoglycerate + 2 H(+) = D-ribulose 1,5-bisphosphate + CO2 + H2O. It carries out the reaction D-ribulose 1,5-bisphosphate + O2 = 2-phosphoglycolate + (2R)-3-phosphoglycerate + 2 H(+). RuBisCO catalyzes two reactions: the carboxylation of D-ribulose 1,5-bisphosphate, the primary event in carbon dioxide fixation, as well as the oxidative fragmentation of the pentose substrate in the photorespiration process. Both reactions occur simultaneously and in competition at the same active site. The chain is Ribulose bisphosphate carboxylase large chain from Ananas comosus (Pineapple).